Reading from the N-terminus, the 1233-residue chain is Mitogen-activated protein kinase kinase kinase kinase 4 (1233 aa).

Alanine 2 is subject to N-acetylalanine. A Phosphoserine modification is found at serine 5. The Protein kinase domain maps to 25–289; it reads FELVEVVGNG…EQLLKHPFIR (265 aa). ATP is bound by residues 31–39 and lysine 53; that span reads VGNGTYGQV. Aspartate 152 serves as the catalytic Proton acceptor. Disordered stretches follow at residues 305–348, 401–463, and 489–805; these read IDRT…VPGE, QKEQ…VERE, and QAML…ETES. A compositionally biased stretch (acidic residues) spans 316–337; it reads DETEYEYSGSEEEEEEVPEQEG. Phosphoserine occurs at positions 323 and 325. The segment covering 521-537 has biased composition (basic and acidic residues); that stretch reads PEPKPHYDPADRAREVQ. At serine 543 the chain carries Phosphoserine. A compositionally biased stretch (polar residues) spans 544 to 559; it reads LKNNVSPVSRSHSFSD. Phosphoserine is present on residues serine 619, serine 621, serine 629, and serine 646. Residues 654 to 663 show a composition bias toward basic and acidic residues; the sequence is LLWERVEKLV. Over residues 666–692 the composition is skewed to low complexity; that stretch reads PGSGSSSGSSNSGSQPGSHPGSQSGSG. Phosphoserine occurs at positions 691, 703, and 706. 2 stretches are compositionally biased toward basic and acidic residues: residues 713-726 and 741-756; these read SAAKKPDDKKEVFR and KELRAVEDVRPPHKVT. The span at 766–781 shows a compositional bias: acidic residues; it reads GTTDEEEEDVEQEGAD. A compositionally biased stretch (polar residues) spans 783-803; sequence STSGPEDTRAASSPNLSNGET. 5 positions are modified to phosphoserine: serine 785, serine 794, serine 795, serine 799, and serine 817. Threonine 822 is subject to Phosphothreonine. Serine 846, serine 849, serine 894, and serine 907 each carry phosphoserine. The mediates interaction with RAP2A stretch occupies residues 852–1206; it reads PFIDPRLLQI…LKFLCGRNDK (355 aa). One can recognise a CNH domain in the interval 920 to 1207; it reads NSEILCAALW…KFLCGRNDKV (288 aa).

Belongs to the protein kinase superfamily. STE Ser/Thr protein kinase family. STE20 subfamily. Interacts with the SH3 domain of the adapter proteins Nck. Interacts (via its CNH regulatory domain) with ATL1 (via the N-terminal region). Interacts with RAP2A (GTP-bound form preferentially). Mg(2+) serves as cofactor. In terms of tissue distribution, appears to be ubiquitous, expressed in all tissue types examined. Highest levels observed in heart and brain.

The protein resides in the cytoplasm. It catalyses the reaction L-seryl-[protein] + ATP = O-phospho-L-seryl-[protein] + ADP + H(+). It carries out the reaction L-threonyl-[protein] + ATP = O-phospho-L-threonyl-[protein] + ADP + H(+). In terms of biological role, serine/threonine kinase that plays a role in the response to environmental stress and cytokines such as TNF-alpha. Appears to act upstream of the JUN N-terminal pathway. Activator of the Hippo signaling pathway which plays a pivotal role in organ size control and tumor suppression by restricting proliferation and promoting apoptosis. MAP4Ks act in parallel to and are partially redundant with STK3/MST2 and STK4/MST2 in the phosphorylation and activation of LATS1/2, and establish MAP4Ks as components of the expanded Hippo pathway. Phosphorylates SMAD1 on Thr-322. The protein is Mitogen-activated protein kinase kinase kinase kinase 4 (Map4k4) of Mus musculus (Mouse).